The chain runs to 295 residues: 4-hydroxybenzoate octaprenyltransferase (295 aa).

The next 8 membrane-spanning stretches (helical) occupy residues 28-48 (AGWLLLLWPTLSALWIAAGGF), 51-71 (WHLLAVFTLGTILMRSAGCCV), 101-121 (ALGVGAVLALVSFGLVLTTNA), 124-144 (IAWSLPALAVTIAYPFAKRFV), 159-179 (IPMAFTAVGGAVPMLAAWLVL), 220-240 (VMAFYLAFVALWAWALAPFGL), 242-262 (WPLHAVLAAMLLQVAWHWRLI), and 274-294 (FTGNHWLGFTLFAGIVAGFAL).

Belongs to the UbiA prenyltransferase family. Mg(2+) serves as cofactor.

The protein localises to the cell inner membrane. The enzyme catalyses all-trans-octaprenyl diphosphate + 4-hydroxybenzoate = 4-hydroxy-3-(all-trans-octaprenyl)benzoate + diphosphate. Its pathway is cofactor biosynthesis; ubiquinone biosynthesis. Functionally, catalyzes the prenylation of para-hydroxybenzoate (PHB) with an all-trans polyprenyl group. Mediates the second step in the final reaction sequence of ubiquinone-8 (UQ-8) biosynthesis, which is the condensation of the polyisoprenoid side chain with PHB, generating the first membrane-bound Q intermediate 3-octaprenyl-4-hydroxybenzoate. This chain is 4-hydroxybenzoate octaprenyltransferase, found in Paracidovorax citrulli (strain AAC00-1) (Acidovorax citrulli).